Consider the following 562-residue polypeptide: Nicotinate phosphoribosyltransferase (562 aa).

Nicotinate is bound by residues Tyr-36, Phe-183, and Thr-225. His-228 is subject to Phosphohistidine. Thr-397 contributes to the 5-phospho-alpha-D-ribose 1-diphosphate binding site.

Belongs to the NAPRTase family. The cofactor is Mg(2+). Requires Mn(2+) as cofactor. Post-translationally, transiently phosphorylated on a His residue during the reaction cycle. Phosphorylation strongly increases the affinity for substrates and increases the rate of nicotinate D-ribonucleotide production. Dephosphorylation regenerates the low-affinity form of the enzyme, leading to product release.

The enzyme catalyses nicotinate + 5-phospho-alpha-D-ribose 1-diphosphate + ATP + H2O = nicotinate beta-D-ribonucleotide + ADP + phosphate + diphosphate. Its pathway is cofactor biosynthesis; NAD(+) biosynthesis; nicotinate D-ribonucleotide from nicotinate: step 1/1. Functionally, catalyzes the first step in the biosynthesis of NAD from nicotinic acid, the ATP-dependent synthesis of beta-nicotinate D-ribonucleotide from nicotinate and 5-phospho-D-ribose 1-phosphate. Helps prevent cellular oxidative stress via its role in NAD biosynthesis. This Caenorhabditis elegans protein is Nicotinate phosphoribosyltransferase.